Consider the following 104-residue polypeptide: Integration host factor subunit beta (104 aa).

The protein belongs to the bacterial histone-like protein family. As to quaternary structure, heterodimer of an alpha and a beta chain.

In terms of biological role, this protein is one of the two subunits of integration host factor, a specific DNA-binding protein that functions in genetic recombination as well as in transcriptional and translational control. This is Integration host factor subunit beta from Xylella fastidiosa (strain M23).